The sequence spans 546 residues: Choline/ethanolamine transporter FLVCR2 (546 aa).

The interval 1–84 (MVNESLNQEE…TLAQPSGLTH (84 aa)) is disordered. Over 1-93 (MVNESLNQEE…HPNELVKEDS (93 aa)) the chain is Cytoplasmic. The segment covering 22 to 49 (QADTSYSTQPSVSIHPSVSGHPSVSIHP) has biased composition (polar residues). Repeat copies occupy residues 31-36 (PSVSIH), 37-42 (PSVSGH), 43-48 (PSVSIH), 49-54 (PSVSGH), 55-60 (PSVSID), 61-66 (PSVSVH), and 67-72 (PSSSAH). The 9 X 6 AA tandem repeats of P-S-[VS]-S-[VIAG]-[HD] stretch occupies residues 31–84 (PSVSIHPSVSGHPSVSIHPSVSGHPSVSIDPSVSVHPSSSAHPSTLAQPSGLTH). Positions 54–74 (HPSVSIDPSVSVHPSSSAHPS) are enriched in low complexity. The stretch at 73–78 (PSTLAQ) is one 8; approximate repeat. The 9; approximate repeat unit spans residues 79 to 84 (PSGLTH). The helical transmembrane segment at 94–118 (VIKVSKRRWAVVLVFSCYSLCNAFQ) threads the bilayer. Choline contacts are provided by Asn115, Ala116, and Trp119. Residues 119-136 (WIQYGSINNIFMNFYGVS) lie on the Extracellular side of the membrane. Residues 137 to 164 (AFAIDWLSMCYMLTYIPLLLPVAWMLEK) form a helical membrane-spanning segment. Residues 165–166 (FG) lie on the Cytoplasmic side of the membrane. Residues 167–186 (LRTIAITGSALNCLGAWVKL) traverse the membrane as a helical segment. Topologically, residues 187 to 193 (GSLEPHL) are extracellular. A helical transmembrane segment spans residues 194–222 (FPVTMVGQVICSVAQVFILGMPSRIASVW). Residue Leu212 participates in choline binding. At 223–227 (FGANE) the chain is on the cytoplasmic side. Residues 228 to 253 (VSTACSMAVFGNQLGIAIGFLVPPVL) traverse the membrane as a helical segment. The Extracellular portion of the chain corresponds to 254-258 (VPNIK). The chain crosses the membrane as a helical span at residues 259–288 (DQEKLAYHISIMFYIIGGVATLLFILVIIV). Residues 289 to 324 (FKEKPKYPPSRAQSLSYALATTDASYLSSIVRLFKN) lie on the Cytoplasmic side of the membrane. The chain crosses the membrane as a helical span at residues 325–355 (LNFVLLVITYGLNAGAFYALSTLLNRMVIMH). Tyr342 contacts choline. The Extracellular portion of the chain corresponds to 356–359 (FPGQ). A helical transmembrane segment spans residues 360-388 (EVNAGRIGLTIVIAGMFGAMISGIWLDKS). Residues 389 to 390 (KT) are Cytoplasmic-facing. Residues 391–413 (YKETTLVVYIMTLVGMVVYTFTL) form a helical membrane-spanning segment. Residues 414–416 (NLN) lie on the Extracellular side of the membrane. A helical membrane pass occupies residues 417–446 (HLWIVFITADSLGFFMTGYLPLGFEFAVEL). The Cytoplasmic segment spans residues 447–454 (TYPESEGV). Residues 455–480 (SSGLLNVSAQVFGIIFTISQGQIIDN) form a helical membrane-spanning segment. A choline-binding site is contributed by Gln464. Residues 481–482 (YG) are Extracellular-facing. The chain crosses the membrane as a helical span at residues 483–505 (SVPGNIFLCVFLALGSALTAFIK). Topologically, residues 506-546 (SDLRRQRANKDAPETKVQEEEEEEEESNTSKVPTVLSEAHL) are cytoplasmic. The span at 511 to 523 (QRANKDAPETKVQ) shows a compositional bias: basic and acidic residues. Positions 511–546 (QRANKDAPETKVQEEEEEEEESNTSKVPTVLSEAHL) are disordered. The residue at position 535 (Ser535) is a Phosphoserine.

This sequence belongs to the major facilitator superfamily. Feline leukemia virus subgroup C receptor (TC 2.A.1.28.1) family. Interacts with components of electron transfer chain complexes III, IV and V including CYC1, NDUFA4, COX4I1, ATP5PD and ATP5F1C; these interactions occur in the absence of heme and are disrupted upon heme binding. Interacts with ATP2A2; this interaction occurs in the absence of heme and promotes ATP2A2 proteasomal degradation; the complex is dissociated upon heme binding. Interacts with HMOX1; this interaction is potentiated in the presence of heme.

The protein localises to the cell membrane. The protein resides in the mitochondrion membrane. It localises to the endoplasmic reticulum membrane. The catalysed reaction is choline(out) = choline(in). The enzyme catalyses ethanolamine(in) = ethanolamine(out). It catalyses the reaction heme b(in) = heme b(out). Choline uniporter that specifically mediates choline uptake at the blood-brain-barrier. Responsible for the majority of choline uptake across the blood-brain-barrier from the circulation into the brain. Choline, a nutrient critical for brain development, is a precursor of phosphatidylcholine, as well as betaine. Also mediates transport of ethanolamine. Choline and ethanolamine transport is not coupled with proton transport and is exclusively driven by the choline gradient across the plasma membrane. However, the presence of an inwardly directed proton gradient enhances choline uptake. Also acts as a heme b transporter. Required to regulate mitochondrial respiration processes, ATP synthesis and thermogenesis. At low heme levels, interacts with components of electron transfer chain (ETC) complexes and ATP2A2, leading to ubiquitin-mediated degradation of ATP2A2 and inhibition of thermogenesis. Upon heme binding, dissociates from ETC complexes to allow switching from mitochondrial ATP synthesis to thermogenesis. This Rattus norvegicus (Rat) protein is Choline/ethanolamine transporter FLVCR2 (Flvcr2).